The following is a 418-amino-acid chain: Glutamyl-tRNA reductase (418 aa).

Residues 49-52 (TCNR), Ser-109, 114-116 (EPQ), and Gln-120 each bind substrate. The Nucleophile role is filled by Cys-50. An NADP(+)-binding site is contributed by 189–194 (GAGETI).

Belongs to the glutamyl-tRNA reductase family. As to quaternary structure, homodimer.

The catalysed reaction is (S)-4-amino-5-oxopentanoate + tRNA(Glu) + NADP(+) = L-glutamyl-tRNA(Glu) + NADPH + H(+). It functions in the pathway porphyrin-containing compound metabolism; protoporphyrin-IX biosynthesis; 5-aminolevulinate from L-glutamyl-tRNA(Glu): step 1/2. Functionally, catalyzes the NADPH-dependent reduction of glutamyl-tRNA(Glu) to glutamate 1-semialdehyde (GSA). The polypeptide is Glutamyl-tRNA reductase (Escherichia coli O6:K15:H31 (strain 536 / UPEC)).